We begin with the raw amino-acid sequence, 255 residues long: Increased copper sensitivity protein 2 (255 aa).

Over residues 1-12 (MGKFEQKERERI) the composition is skewed to basic and acidic residues. Disordered regions lie at residues 1 to 32 (MGKF…KSLG) and 82 to 142 (PGDK…RKSH). Over residues 13–30 (STFSFPTTGSQSSTSIKS) the composition is skewed to polar residues. Positions 131–142 (SGRRKSYHRKSH) are enriched in basic residues. Phosphoserine is present on Ser-217.

This chain is Increased copper sensitivity protein 2 (ICS2), found in Saccharomyces cerevisiae (strain ATCC 204508 / S288c) (Baker's yeast).